The sequence spans 447 residues: Probable glycine dehydrogenase (decarboxylating) subunit 1 (447 aa).

It belongs to the GcvP family. N-terminal subunit subfamily. As to quaternary structure, the glycine cleavage system is composed of four proteins: P, T, L and H. In this organism, the P 'protein' is a heterodimer of two subunits.

The enzyme catalyses N(6)-[(R)-lipoyl]-L-lysyl-[glycine-cleavage complex H protein] + glycine + H(+) = N(6)-[(R)-S(8)-aminomethyldihydrolipoyl]-L-lysyl-[glycine-cleavage complex H protein] + CO2. Its function is as follows. The glycine cleavage system catalyzes the degradation of glycine. The P protein binds the alpha-amino group of glycine through its pyridoxal phosphate cofactor; CO(2) is released and the remaining methylamine moiety is then transferred to the lipoamide cofactor of the H protein. The protein is Probable glycine dehydrogenase (decarboxylating) subunit 1 of Bacillus anthracis (strain A0248).